Consider the following 80-residue polypeptide: Small ribosomal subunit protein uS17 (80 aa).

It belongs to the universal ribosomal protein uS17 family. As to quaternary structure, part of the 30S ribosomal subunit.

One of the primary rRNA binding proteins, it binds specifically to the 5'-end of 16S ribosomal RNA. The polypeptide is Small ribosomal subunit protein uS17 (Brucella abortus (strain S19)).